The primary structure comprises 636 residues: Probable potassium transport system protein Kup (636 aa).

12 helical membrane-spanning segments follow: residues 22–42, 64–84, 114–134, 150–170, 182–202, 220–240, 261–281, 293–313, 351–371, 383–403, 408–428, and 433–453; these read MGLL…SPLY, ILSL…VMFI, ALMV…SMIT, FEGI…ALFL, LFGP…VHGI, FFIV…LALT, WFAL…AILL, LLAP…ATVI, IYIG…VIGF, VAVT…MLLL, PVLA…FFAA, and IVQG…LMST.

Belongs to the HAK/KUP transporter (TC 2.A.72) family.

It localises to the cell inner membrane. It catalyses the reaction K(+)(in) + H(+)(in) = K(+)(out) + H(+)(out). Functionally, transport of potassium into the cell. Likely operates as a K(+):H(+) symporter. This Pseudomonas entomophila (strain L48) protein is Probable potassium transport system protein Kup.